The primary structure comprises 34 residues: Potassium channel toxin alpha-KTx 6.13 (34 aa).

Disulfide bonds link C3/C24, C9/C29, C13/C31, and C19/C34. The residue at position 34 (C34) is a Cysteine amide.

This sequence belongs to the short scorpion toxin superfamily. Potassium channel inhibitor family. Alpha-KTx 06 subfamily. Expressed by the venom gland.

Its subcellular location is the secreted. Its function is as follows. Antagonist of Kv1/KCNA potassium channels. Shows a weak interaction with muscle-type nicotinic acetylcholine receptors (nAChR), since it inhibits alpha-bungarotoxin binding to both muscle-type nAChR from T.californica (IC(50)=490 nM). This suggests it probably weakly inhibits nAChR. This is Potassium channel toxin alpha-KTx 6.13 from Heterometrus spinifer (Asia giant forest scorpion).